Reading from the N-terminus, the 114-residue chain is Protein ORF3 (114 aa).

The interval Met-1 to Val-28 is membrane association. Hydrophobic regions lie at residues Cys-6–Cys-22 and Ala-33–Leu-53. Residues Cys-6–Cys-22 are induction of host SIRPA expression. The tract at residues Val-28–Pro-68 is interaction with host HPX. The segment at Val-48 to Pro-72 is interaction with the capsid protein. Ser-71 carries the post-translational modification Phosphoserine; by host. The segment at Pro-72–Arg-114 is homodimerization, and interaction with host AMBP/bikunin. A disordered region spans residues Leu-91–Arg-114. The interval Arg-95–Val-104 is interaction with host SRC, HCK, FYN, PIK3R3 and GRB2. The PTAP/PSAP motif motif lies at Pro-96–Pro-99.

It belongs to the hepevirus ORF3 protein family. Forms homooligomers. Interacts with host SRC, HCK, FYN, PIK3R3 and GRB2 (via SH3 domain); binding does not activate the kinases. Interacts with host AMBP/bikunin and AMBP/alpha-1-microglobulin peptides. Interacts with host HPX/hemopexin. Interacts (when phosphorylated) with capsid protein ORF2. Interacts with host TSG101; this interaction plays a role in viral release from the host cell. Interacts with host SIRPA; this interaction down-regulates the phosphorylation of host IRF3. Post-translationally, palmitoylated in the N-terminus.

The protein resides in the host endoplasmic reticulum membrane. The protein localises to the host cytoplasm. It localises to the host cytoskeleton. Its subcellular location is the virion. It is found in the host cell membrane. Functionally, small multifunctional phosphoprotein involved in virion morphogenesis, egress and counteracting host innate immunity. Plays critical roles in the final steps of viral release by interacting with host TSG101, a member of the vacuolar protein-sorting pathway and using other cellular host proteins involved in vesicle formation pathway. Also acts as a viroporin and forms ion conductive pores allowing viral particle release. Impairs the generation of type I interferon by down-regulating host TLR3 and TLR7 as well as their downstream signaling pathways. Down-regulates the phosphorylation of host IRF3 via the interaction with host SIRP-alpha, thereby inhibiting IFN-I expression. Interacts with host microtubules. This Hepatitis E virus genotype 1 (isolate Human/China/HeBei/1987) (HEV) protein is Protein ORF3.